We begin with the raw amino-acid sequence, 82 residues long: Putative defensin-like protein 134 (82 aa).

A signal peptide spans 1-26 (MEVRSLNLCFLLVLVLLMSPAPTAVA). 4 cysteine pairs are disulfide-bonded: Cys-32–Cys-79, Cys-42–Cys-68, Cys-47–Cys-74, and Cys-51–Cys-76.

This sequence belongs to the DEFL family.

Its subcellular location is the secreted. This chain is Putative defensin-like protein 134, found in Arabidopsis thaliana (Mouse-ear cress).